The chain runs to 213 residues: Endonuclease III (213 aa).

Residues Leu101–Trp120 form the HhH domain. Cys180, Cys187, Cys190, and Cys196 together coordinate [4Fe-4S] cluster.

The protein belongs to the Nth/MutY family. [4Fe-4S] cluster serves as cofactor.

The catalysed reaction is 2'-deoxyribonucleotide-(2'-deoxyribose 5'-phosphate)-2'-deoxyribonucleotide-DNA = a 3'-end 2'-deoxyribonucleotide-(2,3-dehydro-2,3-deoxyribose 5'-phosphate)-DNA + a 5'-end 5'-phospho-2'-deoxyribonucleoside-DNA + H(+). Functionally, DNA repair enzyme that has both DNA N-glycosylase activity and AP-lyase activity. The DNA N-glycosylase activity releases various damaged pyrimidines from DNA by cleaving the N-glycosidic bond, leaving an AP (apurinic/apyrimidinic) site. The AP-lyase activity cleaves the phosphodiester bond 3' to the AP site by a beta-elimination, leaving a 3'-terminal unsaturated sugar and a product with a terminal 5'-phosphate. In Thermotoga maritima (strain ATCC 43589 / DSM 3109 / JCM 10099 / NBRC 100826 / MSB8), this protein is Endonuclease III.